We begin with the raw amino-acid sequence, 375 residues long: Holliday junction branch migration complex subunit RuvB (375 aa).

Polar residues predominate over residues 1 to 22 (MAIVSSKQSPQPDGSKKPSQAK). Positions 1 to 44 (MAIVSSKQSPQPDGSKKPSQAKSVKKSVEHSKPQQTDALLQPEA) are disordered. The tract at residues 13-218 (DGSKKPSQAK…FGFVQRLRFY (206 aa)) is large ATPase domain (RuvB-L). Residues L57, R58, G99, K102, T103, T104, 165–167 (EDF), R208, Y218, and R255 contribute to the ATP site. A Mg(2+)-binding site is contributed by T103. The tract at residues 219–289 (EADELGQIVL…IAQEALELFN (71 aa)) is small ATPAse domain (RuvB-S). The tract at residues 292–375 (PCGLDWTDRR…PPDEQMRLLS (84 aa)) is head domain (RuvB-H). DNA contacts are provided by R347 and R352.

It belongs to the RuvB family. As to quaternary structure, homohexamer. Forms an RuvA(8)-RuvB(12)-Holliday junction (HJ) complex. HJ DNA is sandwiched between 2 RuvA tetramers; dsDNA enters through RuvA and exits via RuvB. An RuvB hexamer assembles on each DNA strand where it exits the tetramer. Each RuvB hexamer is contacted by two RuvA subunits (via domain III) on 2 adjacent RuvB subunits; this complex drives branch migration. In the full resolvosome a probable DNA-RuvA(4)-RuvB(12)-RuvC(2) complex forms which resolves the HJ.

It localises to the cytoplasm. The enzyme catalyses ATP + H2O = ADP + phosphate + H(+). Its function is as follows. The RuvA-RuvB-RuvC complex processes Holliday junction (HJ) DNA during genetic recombination and DNA repair, while the RuvA-RuvB complex plays an important role in the rescue of blocked DNA replication forks via replication fork reversal (RFR). RuvA specifically binds to HJ cruciform DNA, conferring on it an open structure. The RuvB hexamer acts as an ATP-dependent pump, pulling dsDNA into and through the RuvAB complex. RuvB forms 2 homohexamers on either side of HJ DNA bound by 1 or 2 RuvA tetramers; 4 subunits per hexamer contact DNA at a time. Coordinated motions by a converter formed by DNA-disengaged RuvB subunits stimulates ATP hydrolysis and nucleotide exchange. Immobilization of the converter enables RuvB to convert the ATP-contained energy into a lever motion, pulling 2 nucleotides of DNA out of the RuvA tetramer per ATP hydrolyzed, thus driving DNA branch migration. The RuvB motors rotate together with the DNA substrate, which together with the progressing nucleotide cycle form the mechanistic basis for DNA recombination by continuous HJ branch migration. Branch migration allows RuvC to scan DNA until it finds its consensus sequence, where it cleaves and resolves cruciform DNA. This is Holliday junction branch migration complex subunit RuvB from Acaryochloris marina (strain MBIC 11017).